We begin with the raw amino-acid sequence, 165 residues long: Ribonuclease H2 subunit C (165 aa).

The residue at position 1 (M1) is an N-acetylmethionine.

Belongs to the RNase H2 subunit C family. In terms of assembly, the RNase H2 complex is a heterotrimer composed of the catalytic subunit RNASEH2A and the non-catalytic subunits RNASEH2B and RNASEH2C.

Its subcellular location is the nucleus. Functionally, non catalytic subunit of RNase H2, an endonuclease that specifically degrades the RNA of RNA:DNA hybrids. Participates in DNA replication, possibly by mediating the removal of lagging-strand Okazaki fragment RNA primers during DNA replication. Mediates the excision of single ribonucleotides from DNA:RNA duplexes. The sequence is that of Ribonuclease H2 subunit C (RNASEH2C) from Bos taurus (Bovine).